We begin with the raw amino-acid sequence, 272 residues long: Protein UL24 homolog (272 aa).

Belongs to the herpesviridae UL24 family.

It localises to the virion. The protein localises to the host cytoplasm. It is found in the host nucleus. Its subcellular location is the host nucleolus. The protein resides in the host Golgi apparatus. Its function is as follows. May participate in nuclear egress of viral particles. Plays a role in the dispersal of several host nucleolar proteins including NCL/nucleolin and NPM1. Since deletion of host NCL/nucleolin negatively impact on nuclear egress, UL24 supposedly acts on this process through its effect on host nucleoli. The polypeptide is Protein UL24 homolog (Equine herpesvirus 1 (strain V592) (EHV-1)).